A 281-amino-acid chain; its full sequence is General control transcription factor GCN4 (281 aa).

The residue at position 17 (Ser-17) is a Phosphoserine. Required for transcriptional activation regions lie at residues 89-100 (LDDAVVESFFSS) and 106-125 (PMFE…SLFD). Thr-165 is modified (phosphothreonine; by PHO85). Residues 167-200 (VLEDAKLTQTRKVKKPNSVVKKSHHVGKDDESRL) carry the Nuclear localization signal motif. A disordered region spans residues 217-248 (LSPIVPESSDPAALKRARNTEAARRSRARKLQ). Ser-218 is subject to Phosphoserine. One can recognise a bZIP domain in the interval 225–281 (SDPAALKRARNTEAARRSRARKLQRMKQLEDKVEELLSKNYHLENEVARLKKLVGER). A Nuclear localization signal motif is present at residues 231–249 (KRARNTEAARRSRARKLQR). Residues 231 to 251 (KRARNTEAARRSRARKLQRMK) form a basic motif region. Residues 253–274 (LEDKVEELLSKNYHLENEVARL) form a leucine-zipper region.

The protein belongs to the bZIP family. GCN4 subfamily. Homodimer. Each subunit binds overlapping and non-identical half-sites that flank the central CG base-pair in the pseudo-palindromic motif 5'-ATGA[CG]TCAT-3'. Interacts with the mediator tail; the interaction with GAL11/MED15 is direct. Interacts with the SAGA histone acetyltransferase complex. Interacts with the SWI/SNF chromatin remodeling complex. Post-translationally, phosphorylated by the cyclin-CDK PCL5-PHO85. Phosphorylation of Thr-165 induces degradation of GCN4 by the E3 ubiquitin ligase complex SCF(Cdc4).

Its subcellular location is the nucleus. Functionally, master transcriptional regulator that mediates the response to amino acid starvation. Binds variations of the DNA sequence 5'-ATGA[CG]TCAT-3' in canonical nucleosome-depleted 5'-positioned promoters, and also within coding sequences and 3' non-coding regions. During nutrient starvation (low or poor amino acid, carbon or purine sources), it activates genes required for amino acid biosynthesis and transport, autophagy, cofactor biosynthesis and transport, mitochondrial transport, and additional downstream transcription factors. Activates transcription by recruiting multiple coactivators, including the mediator complex, the SAGA complex, and the SWI/SNF complex, to enable assembly of the pre-initiation complex at core promoters. This is General control transcription factor GCN4 from Saccharomyces cerevisiae (strain ATCC 204508 / S288c) (Baker's yeast).